We begin with the raw amino-acid sequence, 447 residues long: Trichothecene C-3 esterase (447 aa).

The signal sequence occupies residues 1 to 22 (MALNRLVFSLSLWLGFIGAAQA). Residues Asn-59, Asn-66, Asn-136, and Asn-189 are each glycosylated (N-linked (GlcNAc...) asparagine). The active-site Charge relay system is Ser-202. N-linked (GlcNAc...) asparagine glycosylation is found at Asn-238, Asn-284, and Asn-314. Residues Asp-352 and His-384 each act as charge relay system in the active site. Asn-389 and Asn-423 each carry an N-linked (GlcNAc...) asparagine glycan.

It belongs to the AB hydrolase superfamily. Lipase family.

Its pathway is sesquiterpene biosynthesis; trichothecene biosynthesis. Functionally, trichothecene C-3 esterase; part of the core gene cluster that mediates the biosynthesis of trichothecenes, a very large family of chemically related bicyclic sesquiterpene compounds acting as mycotoxins, including T2-toxin. The biosynthesis of trichothecenes begins with the cyclization of farnesyl diphosphate to trichodiene and is catalyzed by the trichodiene synthase TRI5. Trichodiene undergoes a series of oxygenations catalyzed by the cytochrome P450 monooxygenase TRI4. TRI4 controls the addition of four oxygens at C-2, C-3, C-11, and the C-12, C-13-epoxide to form the intermediate isotrichotriol. Isotrichotriol then undergoes a non-enzymatic isomerization and cyclization to form isotrichodermol. During this process, the oxygen at the C-2 position becomes the pyran ring oxygen and the hydroxyl group at C-11 is lost. More complex type A trichothecenes are built by modifying isotrichodermol through a series of paired hydroxylation and acetylation or acylation steps. Isotrichodermol is converted to isotrichodermin by the acetyltransferase TRI101. TRI101 encodes a C-3 transacetylase that acts as a self-protection or resistance factor during biosynthesis and that the presence of a free C-3 hydroxyl group is a key component of Fusarium trichothecene phytotoxicity. A second hydroxyl group is added to C-15 by the trichothecene C-15 hydroxylase TRI11, producing 15-decalonectrin, which is then acetylated by TRI3, producing calonectrin. A third hydroxyl group is added at C-4 by the cytochrome P450 monooxygenase TRI13, converting calonectrin to 3,15-diacetoxyspirpenol, which is subsequently acetylated by the acetyltransferase TRI7. A fourth hydroxyl group is added to C-8 by the cytochrome P450 monooxygenase TRI1, followed by the addition of an isovaleryl moiety by TRI16. Finally, the acetyl group is removed from the C-3 position by the trichothecene C-3 esterase TRI8 to produce T-2 toxin. The protein is Trichothecene C-3 esterase of Fusarium sporotrichioides.